We begin with the raw amino-acid sequence, 573 residues long: E3 ubiquitin-protein ligase TRIM23 (573 aa).

An RING-type; degenerate zinc finger spans residues 31–76; that stretch reads CGVCEDVFSLQGDKVPRLLLCGHTVCHDCLTRLPLHGRAIRCPFDR. The segment at 122-168 adopts a B box-type; degenerate zinc-finger fold; the sequence is ESIIRCDEDEAHVASVYCTVCATHLCSECSQVTHSTKTLAKHRRVPL. The stretch at 351–378 forms a coiled coil; sequence RVVLAKQEITRLLETLQKQQQQFTEVAD. Residues 390–573 are ARF-like; it reads FTKDNRVYHG…LVAAGVLDVA (184 aa). Residues 411–418, 454–458, and 513–516 contribute to the GTP site; these read LDGAGKTT, VGGKH, and KQDV.

This sequence in the C-terminal section; belongs to the small GTPase superfamily. Arf family. Homodimer. Interacts with PSCD1. Interacts with UBE2D2. Interacts with TBK1 (via N-terminal kinase domain) and p62/SQSTM1.

The protein resides in the cytoplasm. It localises to the endomembrane system. Its subcellular location is the golgi apparatus membrane. It is found in the lysosome membrane. It carries out the reaction S-ubiquitinyl-[E2 ubiquitin-conjugating enzyme]-L-cysteine + [acceptor protein]-L-lysine = [E2 ubiquitin-conjugating enzyme]-L-cysteine + N(6)-ubiquitinyl-[acceptor protein]-L-lysine.. The protein operates within protein modification; protein ubiquitination. Functionally, acts as an E3 ubiquitin-protein ligase. Plays an essential role in autophagy activation during viral infection. Mechanistically, activates TANK-binding kinase 1/TBK1 by facilitating its dimerization and ability to phosphorylate the selective autophagy receptor SQSTM1. In order to achieve this function, TRIM23 mediates 'Lys-27'-linked auto-ubiquitination of its ADP-ribosylation factor (ARF) domain to induce its GTPase activity and its recruitment to autophagosomes. In Rattus norvegicus (Rat), this protein is E3 ubiquitin-protein ligase TRIM23 (Trim23).